The primary structure comprises 288 residues: Homoserine kinase (288 aa).

ATP is bound at residue 79 to 89 (PPARGLGSSSA).

It belongs to the GHMP kinase family. Homoserine kinase subfamily.

The protein resides in the cytoplasm. It catalyses the reaction L-homoserine + ATP = O-phospho-L-homoserine + ADP + H(+). The protein operates within amino-acid biosynthesis; L-threonine biosynthesis; L-threonine from L-aspartate: step 4/5. Catalyzes the ATP-dependent phosphorylation of L-homoserine to L-homoserine phosphate. The protein is Homoserine kinase of Listeria monocytogenes serotype 4b (strain F2365).